The sequence spans 464 residues: tRNA modification GTPase MnmE (464 aa).

Residues arginine 29, glutamate 91, and arginine 131 each contribute to the (6S)-5-formyl-5,6,7,8-tetrahydrofolate site. Residues 226 to 387 (GLKVALAGKP…LINYLLKKCG (162 aa)) enclose the TrmE-type G domain. Asparagine 236 is a K(+) binding site. GTP contacts are provided by residues 236-241 (NVGKSS), 255-261 (TDLPGTT), and 280-283 (DTAG). Serine 240 is a binding site for Mg(2+). 3 residues coordinate K(+): threonine 255, leucine 257, and threonine 260. Threonine 261 is a binding site for Mg(2+). Position 464 (lysine 464) interacts with (6S)-5-formyl-5,6,7,8-tetrahydrofolate.

This sequence belongs to the TRAFAC class TrmE-Era-EngA-EngB-Septin-like GTPase superfamily. TrmE GTPase family. Homodimer. Heterotetramer of two MnmE and two MnmG subunits. K(+) serves as cofactor.

Its subcellular location is the cytoplasm. In terms of biological role, exhibits a very high intrinsic GTPase hydrolysis rate. Involved in the addition of a carboxymethylaminomethyl (cmnm) group at the wobble position (U34) of certain tRNAs, forming tRNA-cmnm(5)s(2)U34. This chain is tRNA modification GTPase MnmE, found in Prochlorococcus marinus (strain NATL1A).